We begin with the raw amino-acid sequence, 279 residues long: HTH-type transcriptional regulator HdfR (279 aa).

One can recognise an HTH lysR-type domain in the interval 1–58 (MDTELLKTFLEVSRTRHFGRAAESLYLTQSAVSFRIRQLENQLGVNLFTRHRNNIRLT). The H-T-H motif DNA-binding region spans 18 to 37 (FGRAAESLYLTQSAVSFRIR).

Belongs to the LysR transcriptional regulatory family.

Its function is as follows. Negatively regulates the transcription of the flagellar master operon flhDC by binding to the upstream region of the operon. The chain is HTH-type transcriptional regulator HdfR from Shigella boydii serotype 18 (strain CDC 3083-94 / BS512).